We begin with the raw amino-acid sequence, 327 residues long: tRNA uridine(34) hydroxylase (327 aa).

The region spanning 130 to 224 (LDEDTVVLDT…YGKDPEVQGE (95 aa)) is the Rhodanese domain. The active-site Cysteine persulfide intermediate is Cys-184.

This sequence belongs to the TrhO family.

The enzyme catalyses uridine(34) in tRNA + AH2 + O2 = 5-hydroxyuridine(34) in tRNA + A + H2O. In terms of biological role, catalyzes oxygen-dependent 5-hydroxyuridine (ho5U) modification at position 34 in tRNAs. In Streptococcus thermophilus (strain CNRZ 1066), this protein is tRNA uridine(34) hydroxylase.